The primary structure comprises 444 residues: UDP-N-acetylmuramoylalanine--D-glutamate ligase (444 aa).

113 to 119 is an ATP binding site; it reads GSNGKST.

It belongs to the MurCDEF family.

Its subcellular location is the cytoplasm. The catalysed reaction is UDP-N-acetyl-alpha-D-muramoyl-L-alanine + D-glutamate + ATP = UDP-N-acetyl-alpha-D-muramoyl-L-alanyl-D-glutamate + ADP + phosphate + H(+). It functions in the pathway cell wall biogenesis; peptidoglycan biosynthesis. Its function is as follows. Cell wall formation. Catalyzes the addition of glutamate to the nucleotide precursor UDP-N-acetylmuramoyl-L-alanine (UMA). The chain is UDP-N-acetylmuramoylalanine--D-glutamate ligase from Blochmanniella floridana.